The following is a 165-amino-acid chain: Phosphopantetheine adenylyltransferase (165 aa).

Position 9 (Ser9) interacts with substrate. ATP is bound by residues 9–10 (SF) and His17. 3 residues coordinate substrate: Lys41, Ile75, and Arg89. ATP is bound by residues 90 to 92 (GVR), Glu100, and 125 to 131 (YLFVRSD).

Belongs to the bacterial CoaD family. As to quaternary structure, homohexamer. It depends on Mg(2+) as a cofactor.

The protein localises to the cytoplasm. The catalysed reaction is (R)-4'-phosphopantetheine + ATP + H(+) = 3'-dephospho-CoA + diphosphate. The protein operates within cofactor biosynthesis; coenzyme A biosynthesis; CoA from (R)-pantothenate: step 4/5. Its function is as follows. Reversibly transfers an adenylyl group from ATP to 4'-phosphopantetheine, yielding dephospho-CoA (dPCoA) and pyrophosphate. The polypeptide is Phosphopantetheine adenylyltransferase (Borrelia hermsii (strain HS1 / DAH)).